Consider the following 466-residue polypeptide: Argininosuccinate lyase (466 aa).

2-(N(omega)-L-arginino)succinate is bound by residues Ser-27, Asn-114, and Thr-159. The active-site Proton acceptor is His-160. The Proton donor role is filled by Ser-281. 2-(N(omega)-L-arginino)succinate-binding residues include Asn-289, Tyr-321, Gln-326, and Lys-329.

It belongs to the lyase 1 family. Argininosuccinate lyase subfamily. In terms of assembly, homotetramer. In terms of processing, the N-terminus is blocked. As to expression, eye lens.

The catalysed reaction is 2-(N(omega)-L-arginino)succinate = fumarate + L-arginine. It participates in amino-acid biosynthesis; L-arginine biosynthesis; L-arginine from L-ornithine and carbamoyl phosphate: step 3/3. Its function is as follows. Delta crystallin, the principal crystallin in embryonic lens, is found only in birds and reptiles. This protein also functions as an enzymatically active argininosuccinate lyase, but it has a low activity. This is Argininosuccinate lyase (ASL) from Columba livia (Rock dove).